The following is a 677-amino-acid chain: Polyunsaturated fatty acid lipoxygenase ALOX15B (677 aa).

The 124-residue stretch at 2–125 folds into the PLAT domain; sequence AKFRVRVSTG…ELVLREGAAK (124 aa). Ca(2+) contacts are provided by Gly-15, Gly-17, Asp-39, His-40, Gly-42, Glu-44, Asp-86, and Ala-87. Residues 126–677 enclose the Lipoxygenase domain; the sequence is VSWQDHHRTL…PPLIENSVSI (552 aa). Positions 374, 379, 554, and 677 each coordinate Fe cation.

Belongs to the lipoxygenase family. Fe cation serves as cofactor.

The protein localises to the cytoplasm. Its subcellular location is the cytosol. It localises to the cell membrane. It is found in the cytoskeleton. The protein resides in the membrane. The protein localises to the cell junction. Its subcellular location is the adherens junction. It localises to the focal adhesion. It is found in the nucleus. The enzyme catalyses (5Z,8Z,11Z,14Z)-eicosatetraenoate + O2 = (15S)-hydroperoxy-(5Z,8Z,11Z,13E)-eicosatetraenoate. The catalysed reaction is (9Z,12Z)-octadecadienoate + O2 = 13-hydroperoxy-(9Z,11E)-octadecadienoate. It catalyses the reaction (5S)-hydroxy-(6E,8Z,11Z,14Z)-eicosatetraenoate + O2 = (5S)-hydroxy-(15S)-hydroperoxy-(6E,8Z,11Z,13E)-eicosatetraenoate. It carries out the reaction (5Z,8Z,11Z,14Z)-eicosatetraenoate + O2 = 5-hydroperoxy-(6E,8Z,11Z,14Z)-eicosatetraenoate. The enzyme catalyses (5S,6R)-dihydroxy-(7E,9E,11Z,14Z)-eicosatetraenoate + O2 = (5S,6R)-dihydroxy-(15S)-hydroperoxy-(7E,9E,11Z,13E)-eicosatetraenoate. The catalysed reaction is (5S)-hydroperoxy-(6E,8Z,11Z,14Z)-eicosatetraenoate + O2 = (5S,15S)-dihydroperoxy-(6E,8Z,11Z,13E)-eicosatetraenoate. It catalyses the reaction 2-(5Z,8Z,11Z,14Z-eicosatetraenoyl)-glycerol + O2 = 2-[15(S)-hydroperoxy-(5Z,8Z,11Z,13E)-eicosatetraenoyl]-glycerol. It carries out the reaction (8S)-hydroperoxy-(5Z,9E,11Z,14Z)-eicosatetraenoate + O2 = (8S,15S)-dihydroperoxy-(5Z,9E,11Z,13E)-eicosatetraenoate. The enzyme catalyses N-(5Z,8Z,11Z,14Z)-eicosatetraenoyl-L-alanine + O2 = N-(15S)-hydroperoxy-(5Z,8Z,11Z,13E)-eicosatetraenoyl-alanine. The catalysed reaction is N-(5Z,8Z,11Z,14Z)-eicosatetraenoyl-gamma-aminobutanoate + O2 = N-(15S)-hydroperoxy-(5Z,8Z,11Z,13E)-eicosatetraenoyl-gamma-aminobutanoate. It catalyses the reaction N-(5Z,8Z,11Z,14Z)-eicosatetraenoyl-glycine + O2 = N-(15S)-hydroperoxy-(5Z,8Z,11Z,13E)-eicosatetraenoyl-glycine. It carries out the reaction N-(5Z,8Z,11Z,14Z)-eicosatetraenoyl-taurine + O2 = N-(15S)-hydroperoxy-(5Z,8Z,11Z,13E)-eicosatetraenoyl-taurine. The enzyme catalyses 2-(5Z,8Z,11Z,14Z-eicosatetraenoyl)-glycerol + O2 = 2-[12-hydroperoxy-(5Z,8Z,10E,14Z)-eicosatetraenoyl]-glycerol. The catalysed reaction is 1-octadecanoyl-2-(5Z,8Z,11Z,14Z-eicosatetraenoyl)-sn-glycero-3-phosphocholine + O2 = 1-octadecanoyl-2-(15-hydroperoxy-5Z,8Z,11Z,13E-eicosatetraenoyl)-sn-glycero-3-phosphocholine. It catalyses the reaction a 1-acyl-2-(5Z,8Z,11Z,14Z-eicosatetraenoyl)-sn-glycero-3-phospho-(1D-myo-inositol) + O2 = a 1-acyl-2-(15-hydroperoxy-5Z,8Z,11Z,13E-eicosatetraenoyl)-sn-glycero-3-phospho-(1D-myo-inositol). It carries out the reaction a 1-acyl-2-(8Z,11Z,14Z-eicosatrienoyl)-sn-glycero-3-phospho-(1D-myo-inositol) + O2 = a 1-acyl-2-(15-hydroperoxy-8Z,11Z,13E-eicosatrienoyl)-sn-glycero-3-phospho-(1D-myo-inositol). The enzyme catalyses 1-octadecanoyl-2-(5Z,8Z,11Z,14Z)-eicosatetraenoyl-sn-glycero-3-phosphoethanolamine + O2 = 1-octadecanoyl-2-(15-hydroperoxy-5Z,8Z,11Z,13E-eicosatetraenoyl)-sn-glycero-3-phosphoethanolamine. The catalysed reaction is 1-octadecanoyl-2-(5Z,8Z,11Z,14Z-eicosatetraenoyl)-sn-glycero-3-phospho-(1D-myo-inositol) + O2 = 1-octadecanoyl-2-(15-hydroperoxy-5Z,8Z,11Z,13E-eicosatetraenoyl)-sn-glycero-3-phospho-(1D-myo-inositol). It catalyses the reaction (8Z,11Z,14Z)-eicosatrienoate + O2 = 15-hydroperoxy-(8Z,11Z,13E)-eicosatrienoate. It carries out the reaction (7S)-hydroperoxy-(4Z,8E,10Z,13Z,16Z,19Z)-docosahexaenoate + O2 = (7S,17S)-dihydroperoxy-(4Z,8E,10Z,13Z,15E,19Z)-docosahexaenoate. The protein operates within lipid metabolism; hydroperoxy eicosatetraenoic acid biosynthesis. Non-heme iron-containing dioxygenase that catalyzes the stereo-specific peroxidation of free and esterified polyunsaturated fatty acids (PUFAs) generating a spectrum of bioactive lipid mediators. Inserts a peroxyl group at C15 of arachidonate ((5Z,8Z,11Z,14Z)-eicosatetraenoate) producing (15S)-hydroperoxyeicosatetraenoate/(15S)-HPETE. Also peroxidizes linoleate ((9Z,12Z)-octadecadienoate) to 13-hydroperoxyoctadecadienoate/13-HPODE. Oxygenates arachidonyl derivatives such as 2-arachidonoylglycerol (2-AG) leading to the production and extracellular release of 15-hydroxyeicosatetraenoyl glycerol (15-HETE-G) that acts as a peroxisome proliferator-activated receptor alpha agonist. Has the ability to efficiently class-switch ALOX5 pro-inflammatory mediators into anti-inflammatory intermediates. Participates in the sequential oxidations of DHA ((4Z,7Z,10Z,13Z,16Z,19Z)-docosahexaenoate) to generate specialized pro-resolving mediators (SPMs) resolvin D5 ((7S,17S)-diHPDHA), which can actively down-regulate the immune response and have anti-aggregation properties with platelets. In addition to free PUFAs hydrolyzed from phospholipids, it directly oxidizes PUFAs esterified to membrane-bound phospholipids. Has no detectable 8S-lipoxygenase activity on arachidonate but reacts with (8S)-HPETE to produce (8S,15S)-diHPETE. May regulate progression through the cell cycle and cell proliferation. May also regulate cytokine secretion by macrophages and therefore play a role in the immune response. May also regulate macrophage differentiation into proatherogenic foam cells. The protein is Polyunsaturated fatty acid lipoxygenase ALOX15B of Rattus norvegicus (Rat).